Consider the following 413-residue polypeptide: S-adenosylmethionine synthase (413 aa).

His15 serves as a coordination point for ATP. Residue Asp17 coordinates Mg(2+). Residue Glu43 participates in K(+) binding. Residues Glu56 and Gln100 each contribute to the L-methionine site. The segment at 100–110 is flexible loop; that stretch reads QSPDISQGVNE. ATP is bound by residues 171-173, 248-249, Asp257, 263-264, Ala280, and Lys284; these read DGK, KF, and RK. Residue Asp257 participates in L-methionine binding. An L-methionine-binding site is contributed by Lys288.

Belongs to the AdoMet synthase family. In terms of assembly, homotetramer; dimer of dimers. Mg(2+) serves as cofactor. Requires K(+) as cofactor.

It localises to the cytoplasm. It carries out the reaction L-methionine + ATP + H2O = S-adenosyl-L-methionine + phosphate + diphosphate. It participates in amino-acid biosynthesis; S-adenosyl-L-methionine biosynthesis; S-adenosyl-L-methionine from L-methionine: step 1/1. Functionally, catalyzes the formation of S-adenosylmethionine (AdoMet) from methionine and ATP. The overall synthetic reaction is composed of two sequential steps, AdoMet formation and the subsequent tripolyphosphate hydrolysis which occurs prior to release of AdoMet from the enzyme. This chain is S-adenosylmethionine synthase, found in Prochlorococcus marinus (strain MIT 9515).